The following is a 216-amino-acid chain: 2-phospho-L-lactate guanylyltransferase (216 aa).

The protein belongs to the CofC family. In terms of assembly, homodimer.

It carries out the reaction (2S)-2-phospholactate + GTP + H(+) = (2S)-lactyl-2-diphospho-5'-guanosine + diphosphate. Its pathway is cofactor biosynthesis; coenzyme F420 biosynthesis. Its function is as follows. Guanylyltransferase that catalyzes the activation of (2S)-2-phospholactate (2-PL) as (2S)-lactyl-2-diphospho-5'-guanosine, via the condensation of 2-PL with GTP. It is involved in the biosynthesis of coenzyme F420, a hydride carrier cofactor. This Methanocaldococcus infernus (strain DSM 11812 / JCM 15783 / ME) protein is 2-phospho-L-lactate guanylyltransferase.